Consider the following 219-residue polypeptide: ATP-dependent dethiobiotin synthetase BioD (219 aa).

12–17 is an ATP binding site; the sequence is DLGKTH. T16 is a Mg(2+) binding site. K37 is an active-site residue. S41 serves as a coordination point for substrate. Residues D52, 115 to 118, and 175 to 176 each bind ATP; these read EGAG and SE. Residues D52 and E115 each contribute to the Mg(2+) site.

This sequence belongs to the dethiobiotin synthetase family. In terms of assembly, homodimer. The cofactor is Mg(2+).

The protein localises to the cytoplasm. It catalyses the reaction (7R,8S)-7,8-diammoniononanoate + CO2 + ATP = (4R,5S)-dethiobiotin + ADP + phosphate + 3 H(+). The protein operates within cofactor biosynthesis; biotin biosynthesis; biotin from 7,8-diaminononanoate: step 1/2. Functionally, catalyzes a mechanistically unusual reaction, the ATP-dependent insertion of CO2 between the N7 and N8 nitrogen atoms of 7,8-diaminopelargonic acid (DAPA, also called 7,8-diammoniononanoate) to form a ureido ring. The sequence is that of ATP-dependent dethiobiotin synthetase BioD from Caulobacter vibrioides (strain ATCC 19089 / CIP 103742 / CB 15) (Caulobacter crescentus).